The chain runs to 316 residues: MAMSSLKSRVTLLLNWYTNPYHTPILVAQQLGFYSEEDIKLAILEPADPSDVTEIVGLGTVDFGVKAMIHTVAAKAKGYPVTSIGTLLDEPPTGLIALKSSGINSFQDIVGKRVGYIGEFGKKIIDDLASLAGIDPTSYKTVRIGMNVTDAIYRDVIDTGIGFINFQKVELEHLCGETVFLRIDQLAGLGCCCFCSIQFIVPEITLQQPELVKGFLRATQRGAAYTTEKPEEAYELLCQAKPQLRTPLYQKIFTRTLPFFSRTLINVDRDWDKVGRYTKHLKIIDEHFDISQCYTNRFLPDTPYSDLKPIACCLEN.

At K66 the chain carries N6-(pyridoxal phosphate)lysine. H70 is an active-site residue. Pyridoxal 5'-phosphate is bound at residue 118 to 121 (GEFG). The CCCFC; essential for catalytic activity, may be the site of iron coordination signature appears at 191 to 195 (CCCFC).

The protein belongs to the NMT1/THI5 family. As to quaternary structure, homodimer. It depends on Fe cation as a cofactor.

The enzyme catalyses N(6)-(pyridoxal phosphate)-L-lysyl-[4-amino-5-hydroxymethyl-2-methylpyrimidine phosphate synthase] + L-histidyl-[4-amino-5-hydroxymethyl-2-methylpyrimidine phosphate synthase] + 2 Fe(3+) + 4 H2O = L-lysyl-[4-amino-5-hydroxymethyl-2-methylpyrimidine phosphate synthase] + (2S)-2-amino-5-hydroxy-4-oxopentanoyl-[4-amino-5-hydroxymethyl-2-methylpyrimidine phosphate synthase] + 4-amino-2-methyl-5-(phosphooxymethyl)pyrimidine + 3-oxopropanoate + 2 Fe(2+) + 2 H(+). It participates in cofactor biosynthesis; thiamine diphosphate biosynthesis. Its function is as follows. Responsible for the formation of the pyrimidine heterocycle in the thiamine biosynthesis pathway. Catalyzes the formation of hydroxymethylpyrimidine phosphate (HMP-P) from histidine and pyridoxal phosphate (PLP). The protein uses PLP and the active site histidine to form HMP-P, generating an inactive enzyme. The enzyme can only undergo a single turnover, which suggests it is a suicide enzyme. In Legionella pneumophila subsp. pneumophila (strain Philadelphia 1 / ATCC 33152 / DSM 7513), this protein is 4-amino-5-hydroxymethyl-2-methylpyrimidine phosphate synthase.